A 357-amino-acid polypeptide reads, in one-letter code: Multiple sugar-binding periplasmic protein SbpA (357 aa).

The first 20 residues, 1 to 20 (MSSSFTTTLAGMAVGMLVLA), serve as a signal peptide directing secretion.

It belongs to the bacterial solute-binding protein 2 family.

It localises to the periplasm. Its function is as follows. Mediates chemotaxis towards D-galactose, L-arabinose and D-fucose but not towards D-fructose. Probably part of a binding-protein high affinity uptake system. This Azospirillum brasilense protein is Multiple sugar-binding periplasmic protein SbpA (sbpA).